Here is a 238-residue protein sequence, read N- to C-terminus: Probable transcriptional regulatory protein MGAS2096_Spy0287 (238 aa).

It belongs to the TACO1 family. YeeN subfamily.

Its subcellular location is the cytoplasm. The sequence is that of Probable transcriptional regulatory protein MGAS2096_Spy0287 from Streptococcus pyogenes serotype M12 (strain MGAS2096).